A 249-amino-acid polypeptide reads, in one-letter code: Secretion system apparatus lipoprotein SsaJ (249 aa).

The first 18 residues, 1–18, serve as a signal peptide directing secretion; sequence MKVHRIVFLTVLTFFLTA. Cys19 is lipidated: N-palmitoyl cysteine. Residue Cys19 is the site of S-diacylglycerol cysteine attachment. A helical membrane pass occupies residues 225 to 245; that stretch reads LMLSLTGLLLGVGILIGYFCL.

This sequence belongs to the YscJ lipoprotein family.

The protein localises to the cell outer membrane. In terms of biological role, component of Salmonella pathogenicity island 2 (SPI-2) type III secretion system, required for secretion of some type III-secreted effectors including the SpvB exotoxin. The protein is Secretion system apparatus lipoprotein SsaJ (ssaJ) of Salmonella typhimurium (strain 14028s / SGSC 2262).